A 490-amino-acid chain; its full sequence is Betaine aldehyde dehydrogenase (490 aa).

3 residues coordinate K(+): Thr26, Ile27, and Asp93. 150-152 (GAW) lines the NAD(+) pocket. Lys162 acts as the Charge relay system in catalysis. NAD(+) is bound at residue 176 to 179 (KPSE). Val180 is a K(+) binding site. NAD(+) is bound at residue 230–233 (GVAS). Residue Leu246 coordinates K(+). Glu252 functions as the Proton acceptor in the catalytic mechanism. NAD(+)-binding residues include Gly254, Cys286, and Glu387. The active-site Nucleophile is the Cys286. Position 286 is a cysteine sulfenic acid (-SOH) (Cys286). The K(+) site is built by Lys457 and Gly460. Catalysis depends on Glu464, which acts as the Charge relay system.

It belongs to the aldehyde dehydrogenase family. In terms of assembly, dimer of dimers. The cofactor is K(+).

It carries out the reaction betaine aldehyde + NAD(+) + H2O = glycine betaine + NADH + 2 H(+). Its pathway is amine and polyamine biosynthesis; betaine biosynthesis via choline pathway; betaine from betaine aldehyde: step 1/1. Its function is as follows. Involved in the biosynthesis of the osmoprotectant glycine betaine. Catalyzes the irreversible oxidation of betaine aldehyde to the corresponding acid. This chain is Betaine aldehyde dehydrogenase, found in Escherichia coli (strain ATCC 8739 / DSM 1576 / NBRC 3972 / NCIMB 8545 / WDCM 00012 / Crooks).